A 144-amino-acid chain; its full sequence is uncharacterized protein (144 aa).

This is an uncharacterized protein from Methanocaldococcus jannaschii (strain ATCC 43067 / DSM 2661 / JAL-1 / JCM 10045 / NBRC 100440) (Methanococcus jannaschii).